Consider the following 926-residue polypeptide: LPS-assembly protein LptD (926 aa).

Residues 1 to 22 (MALKSPAFRKKFPLLVTGSLLA) form the signal peptide. Positions 58–99 (VDLPPRPVHDTTSVSSNGTVTSQSTSSGEQVAGTQLVTEAKG) are disordered. Over residues 68–85 (TTSVSSNGTVTSQSTSSG) the composition is skewed to low complexity.

The protein belongs to the LptD family. In terms of assembly, component of the lipopolysaccharide transport and assembly complex. Interacts with LptE and LptA.

The protein resides in the cell outer membrane. Its function is as follows. Together with LptE, is involved in the assembly of lipopolysaccharide (LPS) at the surface of the outer membrane. The sequence is that of LPS-assembly protein LptD from Pseudomonas savastanoi pv. phaseolicola (strain 1448A / Race 6) (Pseudomonas syringae pv. phaseolicola (strain 1448A / Race 6)).